Here is a 108-residue protein sequence, read N- to C-terminus: Zinc finger protein 475 (108 aa).

2 C2HC/C3H-type zinc fingers span residues 6 to 35 (PAVV…KWHN) and 79 to 108 (QLVP…KAAK). Residues Cys-10, Cys-13, His-25, Cys-29, Cys-83, Cys-86, His-98, and Cys-102 each coordinate Zn(2+).

Zn(2+) serves as cofactor.

The sequence is that of Zinc finger protein 475 from Homo sapiens (Human).